The primary structure comprises 350 residues: Biotin synthase (350 aa).

The 219-residue stretch at 63–281 (GDIELATLLS…IAVARITMPK (219 aa)) folds into the Radical SAM core domain. Residues Cys78, Cys82, and Cys85 each contribute to the [4Fe-4S] cluster site. Residues Cys122, Cys153, Cys213, and Arg285 each contribute to the [2Fe-2S] cluster site.

This sequence belongs to the radical SAM superfamily. Biotin synthase family. As to quaternary structure, homodimer. [4Fe-4S] cluster is required as a cofactor. The cofactor is [2Fe-2S] cluster.

The catalysed reaction is (4R,5S)-dethiobiotin + (sulfur carrier)-SH + 2 reduced [2Fe-2S]-[ferredoxin] + 2 S-adenosyl-L-methionine = (sulfur carrier)-H + biotin + 2 5'-deoxyadenosine + 2 L-methionine + 2 oxidized [2Fe-2S]-[ferredoxin]. It participates in cofactor biosynthesis; biotin biosynthesis; biotin from 7,8-diaminononanoate: step 2/2. Functionally, catalyzes the conversion of dethiobiotin (DTB) to biotin by the insertion of a sulfur atom into dethiobiotin via a radical-based mechanism. The chain is Biotin synthase from Acidovorax ebreus (strain TPSY) (Diaphorobacter sp. (strain TPSY)).